The primary structure comprises 215 residues: Adenylate kinase (215 aa).

Residue 10-15 (GAGKGT) participates in ATP binding. The NMP stretch occupies residues 30–59 (STGDIFRKNISENTPLGMEARSYMDKGLLV). AMP contacts are provided by residues Thr-31, Arg-36, 57 to 59 (LLV), 85 to 88 (GFPR), and Gln-92. Residues 126–163 (GRRVCTSCGGSFHIKFNPPTIDGKCNLCGSDIVQRKDD) form an LID region. Position 127 (Arg-127) interacts with ATP. Zn(2+)-binding residues include Cys-130 and Cys-133. 136-137 (SF) provides a ligand contact to ATP. The Zn(2+) site is built by Cys-150 and Cys-153. Positions 160 and 171 each coordinate AMP. ATP is bound at residue Lys-199.

It belongs to the adenylate kinase family. Monomer.

It localises to the cytoplasm. The catalysed reaction is AMP + ATP = 2 ADP. It functions in the pathway purine metabolism; AMP biosynthesis via salvage pathway; AMP from ADP: step 1/1. Its function is as follows. Catalyzes the reversible transfer of the terminal phosphate group between ATP and AMP. Plays an important role in cellular energy homeostasis and in adenine nucleotide metabolism. This is Adenylate kinase from Clostridium botulinum (strain Eklund 17B / Type B).